The sequence spans 393 residues: Chorismate synthase (393 aa).

2 residues coordinate NADP(+): R39 and R45. FMN contacts are provided by residues 133-135 (RSS), 256-257 (NA), G301, 316-320 (KPIPT), and R342.

It belongs to the chorismate synthase family. In terms of assembly, homotetramer. It depends on FMNH2 as a cofactor.

The catalysed reaction is 5-O-(1-carboxyvinyl)-3-phosphoshikimate = chorismate + phosphate. It functions in the pathway metabolic intermediate biosynthesis; chorismate biosynthesis; chorismate from D-erythrose 4-phosphate and phosphoenolpyruvate: step 7/7. Catalyzes the anti-1,4-elimination of the C-3 phosphate and the C-6 proR hydrogen from 5-enolpyruvylshikimate-3-phosphate (EPSP) to yield chorismate, which is the branch point compound that serves as the starting substrate for the three terminal pathways of aromatic amino acid biosynthesis. This reaction introduces a second double bond into the aromatic ring system. The chain is Chorismate synthase from Lysinibacillus sphaericus (strain C3-41).